Consider the following 444-residue polypeptide: MREILHIQGGQCGNQIGSKFWEVVCDEHGIDPTGRYAGTSDLQLERVNVYYNEASCGRFVPRAVLMDLEPGTMDSVRTGPYGQIFRPDNFVFGQSGAGNNWAKGHYTEGAELIDSVLDVVRKEAENCDCLQGFQVCHSLGGGTGSGMGTLLISKIREEYPDRMMLTFSVFPSPKVSDTVVEPYNATLSVHQLVENADECMVLDNEALYDICFRTLKLTTPSFGDLNHLISATMSGVTCCLRFPGQLNSDLRKLAVNLIPFPRLHFFMVGFAPLTSRGSQQYRALTVPELTQQMWDAKNMMCAADPRHGRYLTASAMFRGKMSTKEVDEQMINVQNKNSSYFVEWIPNNVKSSVCDIPPRGLSMASTFVGNSTSIQEMFRRVSEQFTAMFRRKAFLHWYTGEGMDEMEFTEAESNMNDLVSEYQQYQDATADEAEYEEEEDAIQE.

GTP-binding residues include Gln-11, Glu-69, Ser-138, Gly-142, Thr-143, Gly-144, Asn-204, and Asn-226. Glu-69 provides a ligand contact to Mg(2+).

The protein belongs to the tubulin family. In terms of assembly, dimer of alpha and beta chains. A typical microtubule is a hollow water-filled tube with an outer diameter of 25 nm and an inner diameter of 15 nM. Alpha-beta heterodimers associate head-to-tail to form protofilaments running lengthwise along the microtubule wall with the beta-tubulin subunit facing the microtubule plus end conferring a structural polarity. Microtubules usually have 13 protofilaments but different protofilament numbers can be found in some organisms and specialized cells. Mg(2+) serves as cofactor. Expressed in roots, leaf sheaths, anthers, and suspension cultured cells.

The protein resides in the cytoplasm. Its subcellular location is the cytoskeleton. Its function is as follows. Tubulin is the major constituent of microtubules, a cylinder consisting of laterally associated linear protofilaments composed of alpha- and beta-tubulin heterodimers. Microtubules grow by the addition of GTP-tubulin dimers to the microtubule end, where a stabilizing cap forms. Below the cap, tubulin dimers are in GDP-bound state, owing to GTPase activity of alpha-tubulin. This chain is Tubulin beta-6 chain (TUBB6), found in Oryza sativa subsp. japonica (Rice).